Consider the following 120-residue polypeptide: Urease subunit beta (120 aa).

It belongs to the urease beta subunit family. Heterotrimer of UreA (gamma), UreB (beta) and UreC (alpha) subunits. Three heterotrimers associate to form the active enzyme.

The protein resides in the cytoplasm. The catalysed reaction is urea + 2 H2O + H(+) = hydrogencarbonate + 2 NH4(+). The protein operates within nitrogen metabolism; urea degradation; CO(2) and NH(3) from urea (urease route): step 1/1. This is Urease subunit beta from Corynebacterium efficiens (strain DSM 44549 / YS-314 / AJ 12310 / JCM 11189 / NBRC 100395).